Reading from the N-terminus, the 192-residue chain is Ribosome maturation factor RimM (192 aa).

A PRC barrel domain is found at 115–189 (EGEYYLSDLI…RIEITPPKGL (75 aa)).

The protein belongs to the RimM family. As to quaternary structure, binds ribosomal protein uS19.

The protein localises to the cytoplasm. Functionally, an accessory protein needed during the final step in the assembly of 30S ribosomal subunit, possibly for assembly of the head region. Essential for efficient processing of 16S rRNA. May be needed both before and after RbfA during the maturation of 16S rRNA. It has affinity for free ribosomal 30S subunits but not for 70S ribosomes. The polypeptide is Ribosome maturation factor RimM (Acaryochloris marina (strain MBIC 11017)).